Here is a 476-residue protein sequence, read N- to C-terminus: MEYEIVIGLEVHAELATKTKMYCGCTAEFGGQPNTHVCPVCMGLPGALPHINKRAVDYGIKAGLALNCSITHIGRMDRKHIFYPDNSRNYQITQDELPLCTNGYIEIELEDGSKKKIGVERIHIEEDAGKLLHTNAGTLVDFNRCGVPLAEIVSKPDMRSPREAVTYLEELKSILSCVGVSDCKMEEGSLRCDANISVMKKGAKEFGVRTEIKNMNSFKAVEKALNYEYERHIKAIESGEKLTQETRRWDDAKNETAPMRSKEEANDYRYFPEGDLVTLNIDDEWIESIRKTIPELPYQKRERFIKEFGIPKYDASVLTLTMSMADFFEKTAKISGDAKSASNWLMGDISKIMKENYVWIEDLKFTPEQLSELIKLINEGTVSNAIGKKVIIKMFETGKSPKNIIEEEGLIQNSNEDEILNIVKEVLSENEKSIEDYKNGKNRVVGFLIGLVMKKTKGKANPKIVNKLMIDELNKQ.

The protein belongs to the GatB/GatE family. GatB subfamily. Heterotrimer of A, B and C subunits.

The enzyme catalyses L-glutamyl-tRNA(Gln) + L-glutamine + ATP + H2O = L-glutaminyl-tRNA(Gln) + L-glutamate + ADP + phosphate + H(+). The catalysed reaction is L-aspartyl-tRNA(Asn) + L-glutamine + ATP + H2O = L-asparaginyl-tRNA(Asn) + L-glutamate + ADP + phosphate + 2 H(+). Its function is as follows. Allows the formation of correctly charged Asn-tRNA(Asn) or Gln-tRNA(Gln) through the transamidation of misacylated Asp-tRNA(Asn) or Glu-tRNA(Gln) in organisms which lack either or both of asparaginyl-tRNA or glutaminyl-tRNA synthetases. The reaction takes place in the presence of glutamine and ATP through an activated phospho-Asp-tRNA(Asn) or phospho-Glu-tRNA(Gln). The chain is Aspartyl/glutamyl-tRNA(Asn/Gln) amidotransferase subunit B 1 (gatB1) from Clostridium acetobutylicum (strain ATCC 824 / DSM 792 / JCM 1419 / IAM 19013 / LMG 5710 / NBRC 13948 / NRRL B-527 / VKM B-1787 / 2291 / W).